The following is a 103-amino-acid chain: MGKLTLLLLALLVWLQYSLWFGKNGIHDYSRVNDDVVAQQATNAKLKARNDQLFAEIDDLNGGQEAIEERARNELSMTKPGETFYRLVPDASKRAQTAGQNNR.

The Cytoplasmic portion of the chain corresponds to 1 to 3 (MGK). A helical membrane pass occupies residues 4-21 (LTLLLLALLVWLQYSLWF). Residues 22–103 (GKNGIHDYSR…RAQTAGQNNR (82 aa)) are Periplasmic-facing. Positions 33–62 (NDDVVAQQATNAKLKARNDQLFAEIDDLNG) form a coiled coil.

Belongs to the FtsB family. In terms of assembly, part of a complex composed of FtsB, FtsL and FtsQ.

It localises to the cell inner membrane. Its function is as follows. Essential cell division protein. May link together the upstream cell division proteins, which are predominantly cytoplasmic, with the downstream cell division proteins, which are predominantly periplasmic. The chain is Cell division protein FtsB from Salmonella arizonae (strain ATCC BAA-731 / CDC346-86 / RSK2980).